Consider the following 206-residue polypeptide: Small ribosomal subunit protein uS5 (206 aa).

Over residues 1-15 (MTDTPTKQEIQSKND) the composition is skewed to polar residues. The disordered stretch occupies residues 1–50 (MTDTPTKQEIQSKNDNVPAATPVEQKKNNRNDRKRNRRGDSKNLERDSDW). The segment covering 38–50 (RGDSKNLERDSDW) has biased composition (basic and acidic residues). Positions 50–113 (WQERVVQIRR…SDGKKNLVRV (64 aa)) constitute an S5 DRBM domain.

Belongs to the universal ribosomal protein uS5 family. In terms of assembly, part of the 30S ribosomal subunit. Contacts proteins S4 and S8.

With S4 and S12 plays an important role in translational accuracy. Functionally, located at the back of the 30S subunit body where it stabilizes the conformation of the head with respect to the body. This is Small ribosomal subunit protein uS5 from Prochlorococcus marinus (strain AS9601).